A 301-amino-acid polypeptide reads, in one-letter code: 33 kDa chaperonin (301 aa).

Disulfide bonds link Cys-244–Cys-246 and Cys-277–Cys-280.

The protein belongs to the HSP33 family. Post-translationally, under oxidizing conditions two disulfide bonds are formed involving the reactive cysteines. Under reducing conditions zinc is bound to the reactive cysteines and the protein is inactive.

The protein resides in the cytoplasm. Functionally, redox regulated molecular chaperone. Protects both thermally unfolding and oxidatively damaged proteins from irreversible aggregation. Plays an important role in the bacterial defense system toward oxidative stress. The polypeptide is 33 kDa chaperonin (Geobacter sulfurreducens (strain ATCC 51573 / DSM 12127 / PCA)).